Consider the following 413-residue polypeptide: Arginine biosynthesis bifunctional protein ArgJ (413 aa).

Substrate contacts are provided by threonine 158, lysine 184, threonine 195, glutamate 285, asparagine 408, and serine 413. Residue threonine 195 is the Nucleophile of the active site.

It belongs to the ArgJ family. In terms of assembly, heterotetramer of two alpha and two beta chains.

It localises to the cytoplasm. The enzyme catalyses N(2)-acetyl-L-ornithine + L-glutamate = N-acetyl-L-glutamate + L-ornithine. It carries out the reaction L-glutamate + acetyl-CoA = N-acetyl-L-glutamate + CoA + H(+). Its pathway is amino-acid biosynthesis; L-arginine biosynthesis; L-ornithine and N-acetyl-L-glutamate from L-glutamate and N(2)-acetyl-L-ornithine (cyclic): step 1/1. It participates in amino-acid biosynthesis; L-arginine biosynthesis; N(2)-acetyl-L-ornithine from L-glutamate: step 1/4. Catalyzes two activities which are involved in the cyclic version of arginine biosynthesis: the synthesis of N-acetylglutamate from glutamate and acetyl-CoA as the acetyl donor, and of ornithine by transacetylation between N(2)-acetylornithine and glutamate. In Brucella suis biovar 1 (strain 1330), this protein is Arginine biosynthesis bifunctional protein ArgJ.